A 57-amino-acid polypeptide reads, in one-letter code: Large ribosomal subunit protein bL33 (57 aa).

It belongs to the bacterial ribosomal protein bL33 family.

The sequence is that of Large ribosomal subunit protein bL33 from Shewanella sp. (strain MR-4).